Reading from the N-terminus, the 274-residue chain is Isoprenyl transferase (274 aa).

Residue D49 is part of the active site. Residue D49 coordinates Mg(2+). Residues 50–53 (GNRR), F54, R62, H66, and 94–96 (STD) contribute to the substrate site. N97 (proton acceptor) is an active-site residue. Residues R100, R223, and 229–231 (RLS) contribute to the substrate site. E242 provides a ligand contact to Mg(2+).

It belongs to the UPP synthase family. As to quaternary structure, homodimer. Mg(2+) serves as cofactor.

Catalyzes the condensation of isopentenyl diphosphate (IPP) with allylic pyrophosphates generating different type of terpenoids. In Deinococcus radiodurans (strain ATCC 13939 / DSM 20539 / JCM 16871 / CCUG 27074 / LMG 4051 / NBRC 15346 / NCIMB 9279 / VKM B-1422 / R1), this protein is Isoprenyl transferase.